The following is a 466-amino-acid chain: 5-hydroxytryptamine receptor (466 aa).

The tract at residues 1-21 (MNASRLPGFNDTSQDQPYPTS) is disordered. Over 1–66 (MNASRLPGFN…TSFVLMAVTS (66 aa)) the chain is Extracellular. N-linked (GlcNAc...) asparagine glycans are attached at residues Asn2, Asn10, Asn29, Asn41, Asn45, and Asn50. Over residues 10–21 (NDTSQDQPYPTS) the composition is skewed to polar residues. The helical transmembrane segment at 67 to 89 (VVLALIILATIVGNVFVIAAIII) threads the bilayer. The Cytoplasmic portion of the chain corresponds to 90–99 (ERNLQNVANY). A helical membrane pass occupies residues 100–121 (LVASLAVADLMVACLVMPLGAV). Over 122-136 (YEVSQGWILGPELCD) the chain is Extracellular. Cys135 and Cys215 are disulfide-bonded. The chain crosses the membrane as a helical span at residues 137–158 (MWTSSDVLCSSASILHLVAIAT). The Cytoplasmic segment spans residues 159–177 (DRYWAVTDVDYIHIRNEKR). Residues 178–200 (IFTMIVLVWGAALVVSLAPQLGW) form a helical membrane-spanning segment. At 201-228 (KDPDYLARITQQQKCLVSQDLAYQIFAT) the chain is on the extracellular side. The chain crosses the membrane as a helical span at residues 229–250 (MSTFYVPLAVILILYWKIFQTA). Residues 251-386 (RRRIRRRRDP…AKRERKAAKT (136 aa)) are Cytoplasmic-facing. Disordered regions lie at residues 255–282 (RRRR…QSAR) and 339–360 (VPPS…KPER). The span at 339–353 (VPPSVSPEKSSSTVT) shows a compositional bias: low complexity. Residues 387-410 (LAIITGAFVFCWLPFFIMALVMPI) traverse the membrane as a helical segment. The Extracellular segment spans residues 411–419 (CQTCVISDY). The chain crosses the membrane as a helical span at residues 420–442 (LASFFLWLGYFNSTLNPVIYTIF). Residues 443–466 (SPDFRQAFARILFGTHRRRRYKKF) are Cytoplasmic-facing.

This sequence belongs to the G-protein coupled receptor 1 family.

The protein localises to the cell membrane. This is a receptor for 5-hydroxytryptamine (serotonin), a biogenic hormone that function as a neurotransmitter, a hormone, and a mitogen. The chain is 5-hydroxytryptamine receptor from Heliothis virescens (Tobacco budworm moth).